Here is a 90-residue protein sequence, read N- to C-terminus: MNADGPVVNVHVLFFAKSRELANTPRSTVDVPTEITATELLDHLVSKFGLTSIRDNLILAHNESYIDNLSDRILFKEGDELAVIPPLSGG.

The residue at position 90 (Gly-90) is a 1-thioglycine; alternate. Glycyl adenylate; alternate is present on Gly-90.

The protein belongs to the MoaD family. MOCS2A subfamily. As to quaternary structure, heterotetramer; composed of 2 small (Mocs2A) and 2 large (Mocs2B) subunits. In terms of processing, C-terminal thiocarboxylation occurs in 2 steps, it is first acyl-adenylated (-COAMP) via the hesA/moeB/thiF part of MOCS3, then thiocarboxylated (-COSH) via the rhodanese domain of MOCS3.

It is found in the cytoplasm. Its pathway is cofactor biosynthesis; molybdopterin biosynthesis. Its function is as follows. Acts as a sulfur carrier required for molybdopterin biosynthesis. Component of the molybdopterin synthase complex that catalyzes the conversion of precursor Z into molybdopterin by mediating the incorporation of 2 sulfur atoms into precursor Z to generate a dithiolene group. In the complex, serves as sulfur donor by being thiocarboxylated (-COSH) at its C-terminus by MOCS3. After interaction with Mocs2B, the sulfur is then transferred to precursor Z to form molybdopterin. This chain is Molybdopterin synthase sulfur carrier subunit, found in Drosophila simulans (Fruit fly).